The primary structure comprises 301 residues: Sulfate adenylyltransferase subunit 2 (301 aa).

The protein belongs to the PAPS reductase family. CysD subfamily. As to quaternary structure, heterodimer composed of CysD, the smaller subunit, and CysN.

The enzyme catalyses sulfate + ATP + H(+) = adenosine 5'-phosphosulfate + diphosphate. It participates in sulfur metabolism; hydrogen sulfide biosynthesis; sulfite from sulfate: step 1/3. Its function is as follows. With CysN forms the ATP sulfurylase (ATPS) that catalyzes the adenylation of sulfate producing adenosine 5'-phosphosulfate (APS) and diphosphate, the first enzymatic step in sulfur assimilation pathway. APS synthesis involves the formation of a high-energy phosphoric-sulfuric acid anhydride bond driven by GTP hydrolysis by CysN coupled to ATP hydrolysis by CysD. This is Sulfate adenylyltransferase subunit 2 from Trichlorobacter lovleyi (strain ATCC BAA-1151 / DSM 17278 / SZ) (Geobacter lovleyi).